We begin with the raw amino-acid sequence, 251 residues long: Haloacid dehalogenase-like hydrolase domain-containing protein 3 (251 aa).

The residue at position 15 (Lys-15) is an N6-acetyllysine; alternate. Lys-15 is modified (N6-succinyllysine; alternate). The residue at position 130 (Lys-130) is an N6-acetyllysine.

The protein belongs to the HAD-like hydrolase superfamily.

The sequence is that of Haloacid dehalogenase-like hydrolase domain-containing protein 3 (Hdhd3) from Mus musculus (Mouse).